The primary structure comprises 266 residues: HLA class II histocompatibility antigen, DR beta 5 chain (266 aa).

An N-terminal signal peptide occupies residues 1-29 (MVCLKLPGGSYMAKLTVTLMVLSSPLALA). Residues 30–124 (GDTRPRFLQQ…GESFTVQRRV (95 aa)) form a beta-1 region. Topologically, residues 30–227 (GDTRPRFLQQ…RAQSESAQSK (198 aa)) are extracellular. Disulfide bonds link C44/C108 and C146/C202. The N-linked (GlcNAc...) asparagine glycan is linked to N48. The segment at 125 to 227 (EPKVTVYPAR…RAQSESAQSK (103 aa)) is beta-2. Residues 126-214 (PKVTVYPART…EHPSVTSPLT (89 aa)) enclose the Ig-like C1-type domain. A helical membrane pass occupies residues 228-248 (MLSGVGGFVLGLLFLGAGLFI). Residues 249-266 (YFKNQKGHSGLHPTGLVS) are Cytoplasmic-facing.

It belongs to the MHC class II family. Heterodimer of an alpha and a beta subunit; also referred as MHC class II molecule. In the endoplasmic reticulum (ER) it forms a heterononamer; 3 MHC class II molecules bind to a CD74 homotrimer (also known as invariant chain or HLA class II histocompatibility antigen gamma chain). In the endosomal/lysosomal system; CD74 undergoes sequential degradation by various proteases; leaving a small fragment termed CLIP on each MHC class II molecule. MHC class II molecule interacts with HLA_DM, and HLA_DO in B-cells, in order to release CLIP and facilitate the binding of antigenic peptides. In terms of processing, ubiquitinated by MARCH1 and MARCH8 at Lys-254 leading to down-regulation of MHC class II.

The protein localises to the cell membrane. It localises to the endoplasmic reticulum membrane. Its subcellular location is the golgi apparatus. It is found in the trans-Golgi network membrane. The protein resides in the endosome membrane. The protein localises to the lysosome membrane. It localises to the late endosome membrane. Binds peptides derived from antigens that access the endocytic route of antigen presenting cells (APC) and presents them on the cell surface for recognition by the CD4 T-cells. The peptide binding cleft accommodates peptides of 10-30 residues. The peptides presented by MHC class II molecules are generated mostly by degradation of proteins that access the endocytic route, where they are processed by lysosomal proteases and other hydrolases. Exogenous antigens that have been endocytosed by the APC are thus readily available for presentation via MHC II molecules, and for this reason this antigen presentation pathway is usually referred to as exogenous. As membrane proteins on their way to degradation in lysosomes as part of their normal turn-over are also contained in the endosomal/lysosomal compartments, exogenous antigens must compete with those derived from endogenous components. Autophagy is also a source of endogenous peptides, autophagosomes constitutively fuse with MHC class II loading compartments. In addition to APCs, other cells of the gastrointestinal tract, such as epithelial cells, express MHC class II molecules and CD74 and act as APCs, which is an unusual trait of the GI tract. To produce a MHC class II molecule that presents an antigen, three MHC class II molecules (heterodimers of an alpha and a beta chain) associate with a CD74 trimer in the ER to form a heterononamer. Soon after the entry of this complex into the endosomal/lysosomal system where antigen processing occurs, CD74 undergoes a sequential degradation by various proteases, including CTSS and CTSL, leaving a small fragment termed CLIP (class-II-associated invariant chain peptide). The removal of CLIP is facilitated by HLA-DM via direct binding to the alpha-beta-CLIP complex so that CLIP is released. HLA-DM stabilizes MHC class II molecules until primary high affinity antigenic peptides are bound. The MHC II molecule bound to a peptide is then transported to the cell membrane surface. In B-cells, the interaction between HLA-DM and MHC class II molecules is regulated by HLA-DO. Primary dendritic cells (DCs) also to express HLA-DO. Lysosomal microenvironment has been implicated in the regulation of antigen loading into MHC II molecules, increased acidification produces increased proteolysis and efficient peptide loading. This Homo sapiens (Human) protein is HLA class II histocompatibility antigen, DR beta 5 chain.